Here is a 167-residue protein sequence, read N- to C-terminus: Xanthine-guanine phosphoribosyltransferase (167 aa).

5-phospho-alpha-D-ribose 1-diphosphate contacts are provided by residues 47 to 48, Gln79, and 102 to 110; these read RG and DDLVDSGKT. Position 79 (Gln79) interacts with GMP. Asp103 is a binding site for Mg(2+). Guanine-binding residues include Asp106 and Ile149. Xanthine contacts are provided by Asp106 and Ile149. GMP is bound by residues 106–110 and 148–149; these read DSGKT and WI.

Belongs to the purine/pyrimidine phosphoribosyltransferase family. XGPT subfamily. Homotetramer. Mg(2+) serves as cofactor.

The protein resides in the cell inner membrane. The enzyme catalyses GMP + diphosphate = guanine + 5-phospho-alpha-D-ribose 1-diphosphate. It catalyses the reaction XMP + diphosphate = xanthine + 5-phospho-alpha-D-ribose 1-diphosphate. It carries out the reaction IMP + diphosphate = hypoxanthine + 5-phospho-alpha-D-ribose 1-diphosphate. It functions in the pathway purine metabolism; GMP biosynthesis via salvage pathway; GMP from guanine: step 1/1. Its pathway is purine metabolism; XMP biosynthesis via salvage pathway; XMP from xanthine: step 1/1. Functionally, purine salvage pathway enzyme that catalyzes the transfer of the ribosyl-5-phosphate group from 5-phospho-alpha-D-ribose 1-diphosphate (PRPP) to the N9 position of the 6-oxopurines guanine and xanthine to form the corresponding ribonucleotides GMP (guanosine 5'-monophosphate) and XMP (xanthosine 5'-monophosphate), with the release of PPi. To a lesser extent, also acts on hypoxanthine. In Cereibacter sphaeroides (strain ATCC 17025 / ATH 2.4.3) (Rhodobacter sphaeroides), this protein is Xanthine-guanine phosphoribosyltransferase.